Here is a 42-residue protein sequence, read N- to C-terminus: Large ribosomal subunit protein bL36 (42 aa).

This sequence belongs to the bacterial ribosomal protein bL36 family.

This is Large ribosomal subunit protein bL36 from Wolbachia pipientis wMel.